A 753-amino-acid chain; its full sequence is Rsm22-cox11 tandem protein 1, mitochondrial (753 aa).

The transit peptide at 1–39 directs the protein to the mitochondrion; sequence MPILTCRYKILFLYNLRNCFTFQNQRCLIPYGTTTTIRW. Positions 323, 329, 342, and 430 each coordinate [4Fe-4S] cluster. The helical transmembrane segment at 571–591 threads the bilayer; that stretch reads IYYLVAISIFALGLTYAAVPL. Residues 592 to 753 lie on the Mitochondrial intermembrane side of the membrane; the sequence is YRLFCSKTGY…TNGNLLTKLN (162 aa).

It in the N-terminal section; belongs to the methyltransferase superfamily. Rsm22 family. In the C-terminal section; belongs to the COX11/CtaG family. As to quaternary structure, associates with the mitochondrial ribosome (mitoribosome). Only transiently interacts with the mitoribosome. Post-translationally, specific enzymatic cleavages in vivo by mitochondrial processing peptidase (MPP) yield mature proteins including rsm22-1 and cox11-1.

The protein localises to the mitochondrion. Its subcellular location is the mitochondrion inner membrane. Its function is as follows. Mitochondrial ribosome (mitoribosome) assembly factor. Binds at the interface of the head and body domains of the mitochondrial small ribosomal subunit (mt-SSU), occluding the mRNA channel and preventing compaction of the head domain towards the body. Probable inactive methyltransferase: retains the characteristic folding and ability to bind S-adenosyl-L-methionine, but it probably lost its methyltransferase activity. In terms of biological role, exerts its effect at some terminal stage of cytochrome c oxidase synthesis, probably by being involved in the insertion of the copper B into subunit I. This Schizosaccharomyces pombe (strain 972 / ATCC 24843) (Fission yeast) protein is Rsm22-cox11 tandem protein 1, mitochondrial (cox1101).